The following is an 818-amino-acid chain: MRGVRCPGLLVVCILLSLSGAGTQKAESKNCAKWCPINSKCVSNRSCVCKPGFSSEKELITNPAESCEDINECLLPGFSCGDFAMCKNSEGSYTCVCNLGYKLLSGAESFVNESENTCQASVNTGTTPVPSRIHTVTTAPGNLPEQTTTVHQTQMGDSEERTPKDVNECISGQNHCHQSTHCINKLGGYSCICRQGWKPVPGSPNGPVSTVCEDVDECSSGQHQCHNSTVCKNTVGSYKCHCRPGWKPTSGSLRGPDTICQEPPFPTWTLLPTAHSQTLLRFSVEVQNLLRDFNPATVNYTIQKLIEAVDKLLEDPMETQTQQVAAQLLSNLEQSLRTLAQFLPKGPFTYTSPSNTELSLMVKEQDNKDVTTVHHGQTWMELDWAVTAGAKISENGSSVAGILSSPNMEKLLGNTPLNLEQRRASLEDFYGSPIPSVSLKLLSNINSVFLTNTNTEKLASNVTFKFDFTSVESIEPRHELICAFWKAHNGNGYWDTDGCSMNGTGFCHCNHLTSFAILMAQYHVQDPRLELITKVGLLLSLICLLLCILTFLLVKPIQSSRTMVHLHLCICLFLGSIIFLVGVENEGGEVGLRCRLVAMMLHFCFLAAFCWMALEGVELYFLVVRVFQGQGLSTWQRCLIGYGVPLLIVAISMAVVKMDGYGHATYCWLDFRKQGFLWSFSGPVAFIIFCNAAIFVITVWKLTKKFSEINPNMKKLRKARVLTITAIAQLLVLGCTWGFGLFLFNPHSTWLSYIFTLLNCLQGLFLYVMLCLLNKKVREEYWKWACMVTGSKYTEFNSSTTGTGTSQTRALRSSESGM.

The first 23 residues, 1–23 (MRGVRCPGLLVVCILLSLSGAGT), serve as a signal peptide directing secretion. At 24 to 533 (QKAESKNCAK…VQDPRLELIT (510 aa)) the chain is on the extracellular side. The region spanning 27 to 68 (ESKNCAKWCPINSKCVSNRSCVCKPGFSSEKELITNPAESCE) is the EGF-like 1 domain. 12 disulfides stabilise this stretch: cysteine 31/cysteine 41, cysteine 35/cysteine 47, cysteine 49/cysteine 67, cysteine 73/cysteine 86, cysteine 80/cysteine 95, cysteine 97/cysteine 118, cysteine 169/cysteine 182, cysteine 176/cysteine 191, cysteine 193/cysteine 212, cysteine 218/cysteine 231, cysteine 225/cysteine 240, and cysteine 242/cysteine 260. Asparagine 44 carries N-linked (GlcNAc...) asparagine glycosylation. In terms of domain architecture, EGF-like 2; calcium-binding spans 69–119 (DINECLLPGFSCGDFAMCKNSEGSYTCVCNLGYKLLSGAESFVNESENTCQ). Residue asparagine 112 is glycosylated (N-linked (GlcNAc...) asparagine). The region spanning 165–213 (DVNECISGQNHCHQSTHCINKLGGYSCICRQGWKPVPGSPNGPVSTVCE) is the EGF-like 3; calcium-binding domain. Residues 214–261 (DVDECSSGQHQCHNSTVCKNTVGSYKCHCRPGWKPTSGSLRGPDTICQ) enclose the EGF-like 4; calcium-binding domain. Asparagine 227 is a glycosylation site (N-linked (GlcNAc...) asparagine). N-linked (GlcNAc...) asparagine glycans are attached at residues asparagine 299 and asparagine 395. In terms of domain architecture, GAIN-B spans 347–525 (PFTYTSPSNT…AILMAQYHVQ (179 aa)). Serine 425 bears the Phosphoserine mark. N-linked (GlcNAc...) asparagine glycosylation is found at asparagine 461 and asparagine 502. 2 cysteine pairs are disulfide-bonded: cysteine 482/cysteine 507 and cysteine 499/cysteine 509. Positions 482 to 525 (CAFWKAHNGNGYWDTDGCSMNGTGFCHCNHLTSFAILMAQYHVQ) are GPS. Residues 534–554 (KVGLLLSLICLLLCILTFLLV) form a helical membrane-spanning segment. Residues 555 to 562 (KPIQSSRT) lie on the Cytoplasmic side of the membrane. The chain crosses the membrane as a helical span at residues 563-583 (MVHLHLCICLFLGSIIFLVGV). The Extracellular portion of the chain corresponds to 584-602 (ENEGGEVGLRCRLVAMMLH). A helical transmembrane segment spans residues 603-623 (FCFLAAFCWMALEGVELYFLV). Residues 624–637 (VRVFQGQGLSTWQR) are Cytoplasmic-facing. Residues 638 to 658 (CLIGYGVPLLIVAISMAVVKM) form a helical membrane-spanning segment. Over 659-679 (DGYGHATYCWLDFRKQGFLWS) the chain is Extracellular. The chain crosses the membrane as a helical span at residues 680–700 (FSGPVAFIIFCNAAIFVITVW). The Cytoplasmic portion of the chain corresponds to 701-723 (KLTKKFSEINPNMKKLRKARVLT). A helical membrane pass occupies residues 724–744 (ITAIAQLLVLGCTWGFGLFLF). At 745-752 (NPHSTWLS) the chain is on the extracellular side. Residues 753–773 (YIFTLLNCLQGLFLYVMLCLL) form a helical membrane-spanning segment. At 774–818 (NKKVREEYWKWACMVTGSKYTEFNSSTTGTGTSQTRALRSSESGM) the chain is on the cytoplasmic side. Serine 798 carries the phosphoserine modification. Residues 799 to 808 (STTGTGTSQT) are compositionally biased toward low complexity. Residues 799–818 (STTGTGTSQTRALRSSESGM) form a disordered region. Threonine 808 is subject to Phosphothreonine. The span at 809–818 (RALRSSESGM) shows a compositional bias: polar residues. 2 positions are modified to phosphoserine: serine 814 and serine 816.

Belongs to the G-protein coupled receptor 2 family. LN-TM7 subfamily. Forms a heterodimer, consisting of a large extracellular region (alpha subunit) non-covalently linked to a seven-transmembrane moiety (beta subunit). Interacts with complement decay-accelerating factor (DAF). The largest isoform (isoform 1) do not interact with DAF. Also interacts with chondroitin sulfate. Post-translationally, proteolytically cleaved into 2 subunits, an extracellular alpha subunit and a seven-transmembrane subunit. In terms of tissue distribution, although predominantly expressed by cells of the immune system, expressed ubiquitously with particularly high levels of expression in the lung and the thymus gland. In the spleen, expression is detected on most myeloid cells and variable portions of T-cells, B-cells and NK cells. In the bone marrow, expressed in nearly all myeloid cells, whereas little if any expression is found on erythroid cells.

The protein localises to the cell membrane. It is found in the secreted. The protein resides in the extracellular space. Its function is as follows. Receptor potentially involved in both adhesion and signaling processes early after leukocyte activation. Plays an essential role in leukocyte migration. This Mus musculus (Mouse) protein is Adhesion G protein-coupled receptor E5.